The chain runs to 578 residues: MSGIASACLSCLSTVDRWCHITACLGPIGGRSRDGIYETTLADNEREAVSDLLGYLENRAETDFFRGEPLSALSTLVYSDNVDLQRSASLTFAEITERDVREVDRDTLEPILFLLQSSDIEVQRAASAALGNLAVNADNKVLIVALGGLAPLIRQMMSPNVEVQCNAVGCITNLATHEDNKAKIARSGALGPLIRLAKSKDMRVQRNATGALLNMTHSDDNRQQLVNAGAIPVLVQLLSSSDVDVQYYCTTALSNIAVDASNRKRLAQTESRLVQSLVHLMDSSTPKVQCQAALALRNLASDEKYQLEIVRAKGLPPLLRLLQSSYLPLILSAVACIRNISIHPLNESPIIDAGFLKPLVDLLGSTDNEEIQCHAISTLRNLAASSDRNKELVLQAGAVQKCKDLVLKVPLSVQSEMTAAIAVLALSDELKPHLLNLGVFDVLIPLTESESIEVQGNSAAALGNLSSKVGDYSIFVRDWADPNGGIHGYLKRFLASGDPTFQHIAIWTLLQLLESEDKRLISYIAKSDDVVHMVKSISDKNIESDEEDQEDGEGEVIALARRCLEFLGNGPRQTLVEA.

ARM repeat units lie at residues 58–95 (NRAE…FAEI), 96–135 (TERD…NLAV), 137–176 (ADNK…NLAT), 178–217 (EDNK…NMTH), 219–258 (DDNR…NIAV), 262–301 (NRKR…NLAS), 303–342 (EKYQ…NISI), 344–384 (PLNE…NLAA), and 428–467 (DELK…NLSS).

This sequence belongs to the beta-catenin family.

The protein localises to the vacuole membrane. Functions in both vacuole inheritance and protein targeting from the cytoplasm to vacuole. This Aspergillus oryzae (strain ATCC 42149 / RIB 40) (Yellow koji mold) protein is Vacuolar protein 8 (vac8).